The following is a 98-amino-acid chain: MSVYKYYDLIKKPIITEKTTSISEQNKYTFYVNKFAKKLTIKKAIEAIFKVKVKKVNILNIQGKKKRFKGIIGTQINQKKAIVTLEKDHNIDYAGGIK.

It belongs to the universal ribosomal protein uL23 family. In terms of assembly, part of the 50S ribosomal subunit. Contacts protein L29, and trigger factor when it is bound to the ribosome.

One of the early assembly proteins it binds 23S rRNA. One of the proteins that surrounds the polypeptide exit tunnel on the outside of the ribosome. Forms the main docking site for trigger factor binding to the ribosome. The chain is Large ribosomal subunit protein uL23 from Rickettsia typhi (strain ATCC VR-144 / Wilmington).